The following is a 463-amino-acid chain: Mitochondrial dynamics protein MID49 (463 aa).

At methionine 1–leucine 24 the chain is on the mitochondrial intermembrane side. Residues leucine 25 to valine 47 traverse the membrane as a helical segment. Residues lysine 48–arginine 463 lie on the Cytoplasmic side of the membrane. The disordered stretch occupies residues threonine 87–valine 119. A compositionally biased stretch (basic and acidic residues) spans arginine 89–cysteine 98.

Belongs to the MID49/MID51 family.

It is found in the mitochondrion outer membrane. Its function is as follows. Mitochondrial outer membrane protein which regulates mitochondrial organization. It is required for mitochondrial fission and promotes the recruitment and association of the fission mediator dynamin-related protein 1 (DNM1L) to the mitochondrial surface independently of the mitochondrial fission FIS1 and MFF proteins. Regulates DNM1L GTPase activity. The chain is Mitochondrial dynamics protein MID49 (mief2) from Xenopus laevis (African clawed frog).